The chain runs to 105 residues: Iron-sulfur cluster assembly protein CyaY (105 aa).

Belongs to the frataxin family.

Involved in iron-sulfur (Fe-S) cluster assembly. May act as a regulator of Fe-S biogenesis. The protein is Iron-sulfur cluster assembly protein CyaY of Paraburkholderia xenovorans (strain LB400).